Consider the following 255-residue polypeptide: Hemin import ATP-binding protein HmuV (255 aa).

Positions 2-238 (LDVEGLHLKR…AALNAVFGID (237 aa)) constitute an ABC transporter domain. Residue 34–41 (GPNGAGKS) coordinates ATP.

The protein belongs to the ABC transporter superfamily. Heme (hemin) importer (TC 3.A.1.14.5) family. The complex is composed of two ATP-binding proteins (HmuV), two transmembrane proteins (HmuU) and a solute-binding protein (HmuT).

The protein localises to the cell inner membrane. Functionally, part of the ABC transporter complex HmuTUV involved in hemin import. Responsible for energy coupling to the transport system. This Pseudomonas entomophila (strain L48) protein is Hemin import ATP-binding protein HmuV.